The chain runs to 511 residues: RNA polymerase principal sigma factor HrdB (511 aa).

The segment at 72–186 (SAAEPKRTRK…AATEEPEGTE (115 aa)) is disordered. A compositionally biased stretch (basic residues) spans 78-93 (RTRKSVAAKSPAKRTA). Residues 94–121 (TKAVAAKPVTSRKATAPAAPAAPATEPA) are compositionally biased toward low complexity. Positions 132–158 (AAAKKTTAKKATAKKTTAKKAAAKKTT) are enriched in basic residues. The interval 211–347 (TADPVKDYLK…ITRAMADQAR (137 aa)) is binds RNA polymerase-binding protein RbpA. Residues 278–348 (LLEANLRLVV…TRAMADQART (71 aa)) form a sigma-70 factor domain-2 region. The short motif at 302–305 (DLIQ) is the Interaction with polymerase core subunit RpoC element. The sigma-70 factor domain-3 stretch occupies residues 357–433 (EVINKLARVQ…DSEAVVPADA (77 aa)). The interval 446–499 (VLDTLSEREAGVVSMRFGLTDGQPKTLDEIGKVYGVTRERIRQIESKTMSKLRH) is sigma-70 factor domain-4. Positions 472-491 (LDEIGKVYGVTRERIRQIES) form a DNA-binding region, H-T-H motif.

The protein belongs to the sigma-70 factor family. In terms of assembly, homotrimer (Potential). interacts transiently with the RNA polymerase core complex. Interacts with RNA polymerase-binding protein RbpA via its sigma-2 region (residues 211-347) in a free form.

Sigma factors are initiation factors that promote the attachment of RNA polymerase to specific initiation sites and are then released. This sigma factor is the primary sigma factor during exponential growth. Its activity is stimulated by RbpA. The sequence is that of RNA polymerase principal sigma factor HrdB (hrdB) from Streptomyces coelicolor (strain ATCC BAA-471 / A3(2) / M145).